The primary structure comprises 351 residues: Trans-enoyl reductase grgB (351 aa).

The region spanning 10-346 (GAESGGYRLA…GKVHAKKLVV (337 aa)) is the Enoyl reductase (ER) domain. NADP(+) contacts are provided by residues 161 to 164 (ATAT), 184 to 187 (SPAN), Tyr202, 249 to 250 (LE), and 339 to 340 (VH).

The protein belongs to the zinc-containing alcohol dehydrogenase family.

It participates in secondary metabolite biosynthesis. In terms of biological role, trans-enoyl reductase; part of the gene cluster that mediates the biosynthesis of gregatin A, a fungal polyketide featuring an alkylated furanone core. The PKS grgA synthesizes C11 and C4 polyketide chains in the presence and absence of the trans-enoyl reductase grgB, respectively. The polyketide transferase grgF is then responsible for the fusion of the two carbon chains to produce the furanone skeleton of gregatin A. Next, the cytochrome P450 monooxygenase grgG accepts performs the oxidative cyclization to furnish the gregatin scaffold and leads to the formation of desmethylgregatin A. Finally, the O-methyltransferase grgD methylates the carboxyl group of desmethylgregatin A to provide gregatin A. This chain is Trans-enoyl reductase grgB, found in Penicillium sp.